The primary structure comprises 99 residues: uncharacterized protein (99 aa).

The interval 50 to 77 (SAHWEDARSSGGTSPIRARAGSEGRGCQ) is disordered.

This is an uncharacterized protein from Homo sapiens (Human).